Consider the following 256-residue polypeptide: 5-keto-4-deoxy-D-glucarate aldolase (256 aa).

His-50 acts as the Proton acceptor in catalysis. Gln-151 is a binding site for substrate. Glu-153 provides a ligand contact to Mg(2+). Substrate-binding residues include Ser-178 and Asp-179. Residue Asp-179 coordinates Mg(2+).

Belongs to the HpcH/HpaI aldolase family. KDGluc aldolase subfamily. Homohexamer; trimer of dimers. Requires Mg(2+) as cofactor.

The enzyme catalyses 5-dehydro-4-deoxy-D-glucarate = 2-hydroxy-3-oxopropanoate + pyruvate. It catalyses the reaction 2-dehydro-3-deoxy-D-glucarate = 2-hydroxy-3-oxopropanoate + pyruvate. It participates in carbohydrate acid metabolism; galactarate degradation; D-glycerate from galactarate: step 2/3. Functionally, catalyzes the reversible retro-aldol cleavage of both 5-keto-4-deoxy-D-glucarate and 2-keto-3-deoxy-D-glucarate to pyruvate and tartronic semialdehyde. In Klebsiella pneumoniae subsp. pneumoniae (strain ATCC 700721 / MGH 78578), this protein is 5-keto-4-deoxy-D-glucarate aldolase.